The chain runs to 255 residues: Type III pantothenate kinase (255 aa).

6–13 (DVGNTNTV) provides a ligand contact to ATP. 108-111 (GADR) is a binding site for substrate. D110 acts as the Proton acceptor in catalysis. D130 serves as a coordination point for K(+). An ATP-binding site is contributed by T133. T185 contributes to the substrate binding site.

Belongs to the type III pantothenate kinase family. Homodimer. NH4(+) is required as a cofactor. The cofactor is K(+).

The protein resides in the cytoplasm. It catalyses the reaction (R)-pantothenate + ATP = (R)-4'-phosphopantothenate + ADP + H(+). It participates in cofactor biosynthesis; coenzyme A biosynthesis; CoA from (R)-pantothenate: step 1/5. Catalyzes the phosphorylation of pantothenate (Pan), the first step in CoA biosynthesis. In Hyphomonas neptunium (strain ATCC 15444), this protein is Type III pantothenate kinase.